The chain runs to 543 residues: uncharacterized protein (543 aa).

The TRAM domain occupies 1-59 (MLKKNDIVEVEIVDLTHEGAGVAKVDGLVFFVENALPSEKILMRVLKVNKKIGFGKVEK). S-adenosyl-L-methionine is bound by residues Gln283, Tyr312, Glu333, and Asp381. Catalysis depends on Cys408, which acts as the Nucleophile.

The protein belongs to the class I-like SAM-binding methyltransferase superfamily. RNA M5U methyltransferase family.

This is an uncharacterized protein from Streptococcus pneumoniae (strain ATCC BAA-255 / R6).